Here is a 331-residue protein sequence, read N- to C-terminus: GATA transcription factor 12 (331 aa).

Disordered stretches follow at residues Glu30 to Phe49 and Ser105 to Ala138. Positions Val34–Ser47 are enriched in low complexity. Over residues Asp116–Val134 the composition is skewed to polar residues. Positions Lys139 to Arg146 match the Nuclear localization signal motif. Positions Ser174–Glu218 are disordered. The segment at Gly215–Leu269 adopts a GATA-type zinc-finger fold.

Belongs to the type IV zinc-finger family. Class A subfamily. As to expression, expressed in the vascular cylinder of roots. Expressed in the differentiation zone of the root stele.

The protein localises to the nucleus. Transcriptional activator that specifically binds 5'-GATA-3' or 5'-GAT-3' motifs within gene promoters. May be involved in the regulation of some light-responsive genes. Transcription activator involved in xylem formation. Functions upstream of NAC030/VND7, a master switch of xylem vessel differentiation. The sequence is that of GATA transcription factor 12 from Arabidopsis thaliana (Mouse-ear cress).